A 626-amino-acid chain; its full sequence is NAD-dependent malic enzyme, mitochondrial (626 aa).

The transit peptide at 1–34 (MAIFSNQMRLSSTLLKRLHQRVAAAVNSSSSRNF) directs the protein to the mitochondrion. Fumarate contacts are provided by Arg-91 and Arg-125. The Proton donor role is filled by Tyr-146. Arg-199 contacts (S)-malate. Arg-199 lines the NAD(+) pocket. Lys-217 functions as the Proton acceptor in the catalytic mechanism. A divalent metal cation-binding residues include Glu-288, Asp-289, and Asp-312. Ala-348 and Ala-351 together coordinate NAD(+). 2 residues coordinate (S)-malate: Asn-467 and Asn-512.

The protein belongs to the malic enzymes family. Heterodimer of two related subunits. Requires Mg(2+) as cofactor. The cofactor is Mn(2+).

The protein resides in the mitochondrion matrix. The catalysed reaction is (S)-malate + NAD(+) = pyruvate + CO2 + NADH. In Solanum tuberosum (Potato), this protein is NAD-dependent malic enzyme, mitochondrial.